A 256-amino-acid polypeptide reads, in one-letter code: MSGFNFEVMVPEQGGKVVFSLTETGSCVSFYGDDEPGEGSCELASENMDFPSCPLGNGDDFCLSLALSTMRWSGMTKRNNFMDRFIGSFVHCTPVMIWSYGNLSKKSHHKMVCHTCPDEYKFSDKDEMQGYYEECLEASTDIFLDELATVVTGGFFPVGLKGSWGGWYLKYVRYAGPLAGSSGFIVNQRFYDRAQNKTGSRVVSMVEMDGDGLSFIYEKPSVYHSDGCTGSAARFWKRDHNERAGVELRAGLHFRM.

It localises to the host cytoplasm. It is found in the host perinuclear region. Functionally, plays a role in inhibition of the host innate immune system by counteracting the type I interferon signaling. The chain is Non-structural protein 1 from Infectious salmon anemia virus (isolate Atlantic salmon/Norway/810/9/99) (ISAV).